The primary structure comprises 555 residues: Synaptotagmin-14 (555 aa).

The Extracellular segment spans residues 1–24; sequence MAIEGGERTCGVHELICIRKVSPE. The chain crosses the membrane as a helical; Signal-anchor for type III membrane protein span at residues 25–47; sequence AVGFLSAVGVFIILMLLLFLYIN. The Cytoplasmic segment spans residues 48 to 555; the sequence is KKFCFENVGG…VCRWHALLES (508 aa). Disordered regions lie at residues 157-179 and 222-257; these read TPPL…HLSC and GYEE…DPEP. C2 domains are found at residues 260–379 and 415–550; these read KYGT…SLPV and SVPE…CRWH.

The protein belongs to the synaptotagmin family. As to quaternary structure, homodimer. Can also form heterodimers. Highly expressed in fetal and adult brain tissue.

It is found in the membrane. Its function is as follows. May be involved in the trafficking and exocytosis of secretory vesicles in non-neuronal tissues. Is Ca(2+)-independent. The chain is Synaptotagmin-14 (SYT14) from Homo sapiens (Human).